The following is a 497-amino-acid chain: ATP synthase subunit alpha 2 (497 aa).

167–174 (GERATGKT) lines the ATP pocket.

This sequence belongs to the ATPase alpha/beta chains family. As to quaternary structure, F-type ATPases have 2 components, CF(1) - the catalytic core - and CF(0) - the membrane proton channel. CF(1) has five subunits: alpha(3), beta(3), gamma(1), delta(1), epsilon(1). CF(0) has four main subunits: a(1), b(1), b'(1) and c(9-12).

Its subcellular location is the cell inner membrane. It carries out the reaction ATP + H2O + 4 H(+)(in) = ADP + phosphate + 5 H(+)(out). Produces ATP from ADP in the presence of a proton gradient across the membrane. The alpha chain is a regulatory subunit. This is ATP synthase subunit alpha 2 from Cereibacter sphaeroides (strain ATCC 17029 / ATH 2.4.9) (Rhodobacter sphaeroides).